The sequence spans 384 residues: Chaperone protein DnaJ (384 aa).

One can recognise a J domain in the interval 5 to 70 (DYYEVLGVSK…DKKAAYDRYG (66 aa)). The disordered stretch occupies residues 16–47 (ASSDDIKKGYRRKAKELHPDRNKDDPNAEAQF). A compositionally biased stretch (basic and acidic residues) spans 31-47 (ELHPDRNKDDPNAEAQF). The segment at 143–221 (GLQKTINVPT…CQGAGRVEKD (79 aa)) adopts a CR-type zinc-finger fold. Residues C156, C159, C173, C176, C195, C198, C209, and C212 each coordinate Zn(2+). CXXCXGXG motif repeat units follow at residues 156 to 163 (CKTCNGSG), 173 to 180 (CPTCSGMG), 195 to 202 (CPTCSGLG), and 209 to 216 (CKSCQGAG).

This sequence belongs to the DnaJ family. In terms of assembly, homodimer. It depends on Zn(2+) as a cofactor.

The protein resides in the cytoplasm. In terms of biological role, participates actively in the response to hyperosmotic and heat shock by preventing the aggregation of stress-denatured proteins and by disaggregating proteins, also in an autonomous, DnaK-independent fashion. Unfolded proteins bind initially to DnaJ; upon interaction with the DnaJ-bound protein, DnaK hydrolyzes its bound ATP, resulting in the formation of a stable complex. GrpE releases ADP from DnaK; ATP binding to DnaK triggers the release of the substrate protein, thus completing the reaction cycle. Several rounds of ATP-dependent interactions between DnaJ, DnaK and GrpE are required for fully efficient folding. Also involved, together with DnaK and GrpE, in the DNA replication of plasmids through activation of initiation proteins. This chain is Chaperone protein DnaJ, found in Roseobacter denitrificans (strain ATCC 33942 / OCh 114) (Erythrobacter sp. (strain OCh 114)).